Consider the following 54-residue polypeptide: Large ribosomal subunit protein bL33 (54 aa).

This sequence belongs to the bacterial ribosomal protein bL33 family.

The sequence is that of Large ribosomal subunit protein bL33 from Rhodopirellula baltica (strain DSM 10527 / NCIMB 13988 / SH1).